The following is a 264-amino-acid chain: Glutamate racemase (264 aa).

Substrate is bound by residues 9-10 and 41-42; these read DS and YG. Residue C72 is the Proton donor/acceptor of the active site. 73–74 is a binding site for substrate; that stretch reads NT. Catalysis depends on C183, which acts as the Proton donor/acceptor. 184 to 185 lines the substrate pocket; the sequence is TH.

It belongs to the aspartate/glutamate racemases family.

The enzyme catalyses L-glutamate = D-glutamate. The protein operates within cell wall biogenesis; peptidoglycan biosynthesis. Provides the (R)-glutamate required for cell wall biosynthesis. This is Glutamate racemase from Geobacillus sp. (strain WCH70).